A 256-amino-acid polypeptide reads, in one-letter code: Small ribosomal subunit protein eS1 (256 aa).

The segment covering 1-18 (MAVGKNKRLSKGKKGLKK) has biased composition (basic residues). Positions 1 to 22 (MAVGKNKRLSKGKKGLKKKTQD) are disordered. Alanine 2 is subject to N-acetylalanine; partial.

The protein belongs to the eukaryotic ribosomal protein eS1 family. In terms of assembly, component of the small ribosomal subunit (SSU). Mature N.crassa ribosomes consist of a small (40S) and a large (60S) subunit. The 40S small subunit contains 1 molecule of ribosomal RNA (18S rRNA) and at least 32 different proteins. The large 60S subunit contains 3 rRNA molecules (26S, 5.8S and 5S rRNA) and at least 42 different proteins.

It is found in the cytoplasm. In terms of biological role, component of the ribosome, a large ribonucleoprotein complex responsible for the synthesis of proteins in the cell. The small ribosomal subunit (SSU) binds messenger RNAs (mRNAs) and translates the encoded message by selecting cognate aminoacyl-transfer RNA (tRNA) molecules. The large subunit (LSU) contains the ribosomal catalytic site termed the peptidyl transferase center (PTC), which catalyzes the formation of peptide bonds, thereby polymerizing the amino acids delivered by tRNAs into a polypeptide chain. The nascent polypeptides leave the ribosome through a tunnel in the LSU and interact with protein factors that function in enzymatic processing, targeting, and the membrane insertion of nascent chains at the exit of the ribosomal tunnel. The polypeptide is Small ribosomal subunit protein eS1 (rps1) (Neurospora crassa (strain ATCC 24698 / 74-OR23-1A / CBS 708.71 / DSM 1257 / FGSC 987)).